A 411-amino-acid polypeptide reads, in one-letter code: 2,3-bisphosphoglycerate-independent phosphoglycerate mutase (411 aa).

This sequence belongs to the BPG-independent phosphoglycerate mutase family. A-PGAM subfamily.

The catalysed reaction is (2R)-2-phosphoglycerate = (2R)-3-phosphoglycerate. It functions in the pathway carbohydrate degradation; glycolysis; pyruvate from D-glyceraldehyde 3-phosphate: step 3/5. In terms of biological role, catalyzes the interconversion of 2-phosphoglycerate and 3-phosphoglycerate. The chain is 2,3-bisphosphoglycerate-independent phosphoglycerate mutase from Thermococcus kodakarensis (strain ATCC BAA-918 / JCM 12380 / KOD1) (Pyrococcus kodakaraensis (strain KOD1)).